The sequence spans 425 residues: Glutamyl-tRNA reductase (425 aa).

Substrate contacts are provided by residues threonine 47–arginine 50, serine 107, glutamate 112–glutamine 114, and glutamine 118. The active-site Nucleophile is the cysteine 48. Position 187 to 192 (glycine 187 to alanine 192) interacts with NADP(+).

It belongs to the glutamyl-tRNA reductase family. Homodimer.

The catalysed reaction is (S)-4-amino-5-oxopentanoate + tRNA(Glu) + NADP(+) = L-glutamyl-tRNA(Glu) + NADPH + H(+). The protein operates within porphyrin-containing compound metabolism; protoporphyrin-IX biosynthesis; 5-aminolevulinate from L-glutamyl-tRNA(Glu): step 1/2. Its pathway is porphyrin-containing compound metabolism; chlorophyll biosynthesis. Its function is as follows. Catalyzes the NADPH-dependent reduction of glutamyl-tRNA(Glu) to glutamate 1-semialdehyde (GSA). The chain is Glutamyl-tRNA reductase from Roseiflexus castenholzii (strain DSM 13941 / HLO8).